The chain runs to 35 residues: MSDIN-like toxin proprotein 6 (35 aa).

Residues 1 to 10 constitute a propeptide that is removed on maturation; sequence MSDINTTRLP. Residues 11–18 constitute a cross-link (cyclopeptide (Phe-Pro)); that stretch reads FVFVASPP. Positions 19 to 35 are excised as a propeptide; sequence CVGDDIAMVLTRGENLC.

This sequence belongs to the MSDIN fungal toxin family. Post-translationally, processed by the macrocyclase-peptidase enzyme POPB to yield a toxic cyclic octapeptide. POPB first removes 10 residues from the N-terminus. Conformational trapping of the remaining peptide forces the enzyme to release this intermediate rather than proceed to macrocyclization. The enzyme rebinds the remaining peptide in a different conformation and catalyzes macrocyclization of the N-terminal 8 residues. In terms of tissue distribution, expressed in basidiocarps.

In terms of biological role, probable toxin that belongs to the MSDIN-like toxin family responsible for a large number of food poisoning cases and deaths. The polypeptide is MSDIN-like toxin proprotein 6 (Amanita exitialis (Guangzhou destroying angel)).